We begin with the raw amino-acid sequence, 414 residues long: Serine hydroxymethyltransferase (414 aa).

(6S)-5,6,7,8-tetrahydrofolate contacts are provided by residues leucine 116 and 120-122 (GHL). An N6-(pyridoxal phosphate)lysine modification is found at lysine 224. Residue 348–350 (SPF) coordinates (6S)-5,6,7,8-tetrahydrofolate.

The protein belongs to the SHMT family. Homodimer. Pyridoxal 5'-phosphate is required as a cofactor.

It localises to the cytoplasm. It catalyses the reaction (6R)-5,10-methylene-5,6,7,8-tetrahydrofolate + glycine + H2O = (6S)-5,6,7,8-tetrahydrofolate + L-serine. The protein operates within one-carbon metabolism; tetrahydrofolate interconversion. It participates in amino-acid biosynthesis; glycine biosynthesis; glycine from L-serine: step 1/1. Its function is as follows. Catalyzes the reversible interconversion of serine and glycine with tetrahydrofolate (THF) serving as the one-carbon carrier. This reaction serves as the major source of one-carbon groups required for the biosynthesis of purines, thymidylate, methionine, and other important biomolecules. Also exhibits THF-independent aldolase activity toward beta-hydroxyamino acids, producing glycine and aldehydes, via a retro-aldol mechanism. The chain is Serine hydroxymethyltransferase from Campylobacter jejuni subsp. doylei (strain ATCC BAA-1458 / RM4099 / 269.97).